The sequence spans 151 residues: Major latex allergen Hev b 5 (151 aa).

A disordered region spans residues 1-151; the sequence is MASVEVESAA…TEVPVEKTEE (151 aa). The residue at position 2 (alanine 2) is an N-acetylalanine. The span at 17-31 shows a compositional bias: basic and acidic residues; that stretch reads ETPEVTKAEETKTEE. Low complexity-rich tracts occupy residues 36–45 and 53–64; these read PASEQETADA and TAAPAEPEAPAP. Composition is skewed to basic and acidic residues over residues 65-80, 103-113, and 122-133; these read ETEK…KTEE, EEPKHETKETE, and EGEKPAEEEKPI. The segment covering 134–144 has biased composition (low complexity); that stretch reads TEAAETATTEV.

To kiwi fruit protein PKIWI501. Post-translationally, the N-terminus is blocked.

The protein is Major latex allergen Hev b 5 of Hevea brasiliensis (Para rubber tree).